The sequence spans 216 residues: GTP cyclohydrolase 1 (216 aa).

3 residues coordinate Zn(2+): cysteine 108, histidine 111, and cysteine 179.

The protein belongs to the GTP cyclohydrolase I family. In terms of assembly, toroid-shaped homodecamer, composed of two pentamers of five dimers.

It carries out the reaction GTP + H2O = 7,8-dihydroneopterin 3'-triphosphate + formate + H(+). Its pathway is cofactor biosynthesis; 7,8-dihydroneopterin triphosphate biosynthesis; 7,8-dihydroneopterin triphosphate from GTP: step 1/1. The chain is GTP cyclohydrolase 1 from Shewanella oneidensis (strain ATCC 700550 / JCM 31522 / CIP 106686 / LMG 19005 / NCIMB 14063 / MR-1).